The chain runs to 428 residues: Serine--tRNA ligase (428 aa).

Position 236–238 (236–238) interacts with L-serine; it reads TAE. 267–269 provides a ligand contact to ATP; that stretch reads RSE. L-serine is bound at residue Glu-290. Residue 354 to 357 coordinates ATP; the sequence is EISS. L-serine is bound at residue Ser-388.

It belongs to the class-II aminoacyl-tRNA synthetase family. Type-1 seryl-tRNA synthetase subfamily. Homodimer. The tRNA molecule binds across the dimer.

It is found in the cytoplasm. It catalyses the reaction tRNA(Ser) + L-serine + ATP = L-seryl-tRNA(Ser) + AMP + diphosphate + H(+). The enzyme catalyses tRNA(Sec) + L-serine + ATP = L-seryl-tRNA(Sec) + AMP + diphosphate + H(+). Its pathway is aminoacyl-tRNA biosynthesis; selenocysteinyl-tRNA(Sec) biosynthesis; L-seryl-tRNA(Sec) from L-serine and tRNA(Sec): step 1/1. Functionally, catalyzes the attachment of serine to tRNA(Ser). Is also able to aminoacylate tRNA(Sec) with serine, to form the misacylated tRNA L-seryl-tRNA(Sec), which will be further converted into selenocysteinyl-tRNA(Sec). This Psychrobacter sp. (strain PRwf-1) protein is Serine--tRNA ligase.